The sequence spans 251 residues: HTH-type transcriptional regulator UlaR (251 aa).

The HTH deoR-type domain maps to 3–58 (EAQRHQILLEMLAQLGFVTVEKVVERLGISPATARRDINKLGESGKLKKVRNGAEA). The segment at residues 20 to 39 (VTVEKVVERLGISPATARRD) is a DNA-binding region (H-T-H motif).

Its subcellular location is the cytoplasm. In terms of biological role, represses ulaG and the ulaABCDEF operon. The sequence is that of HTH-type transcriptional regulator UlaR from Shigella flexneri.